Here is a 409-residue protein sequence, read N- to C-terminus: LL-diaminopimelate aminotransferase (409 aa).

Tyr15 and Gly42 together coordinate substrate. Pyridoxal 5'-phosphate is bound by residues Tyr72, 108 to 109 (AK), Tyr132, Asn186, Tyr217, and 245 to 247 (SFS). Residues Lys109, Tyr132, and Asn186 each contribute to the substrate site. Lys248 is modified (N6-(pyridoxal phosphate)lysine). Residues Arg256 and Asn291 each contribute to the pyridoxal 5'-phosphate site. 2 residues coordinate substrate: Asn291 and Arg387.

It belongs to the class-I pyridoxal-phosphate-dependent aminotransferase family. LL-diaminopimelate aminotransferase subfamily. Homodimer. Requires pyridoxal 5'-phosphate as cofactor.

It carries out the reaction (2S,6S)-2,6-diaminopimelate + 2-oxoglutarate = (S)-2,3,4,5-tetrahydrodipicolinate + L-glutamate + H2O + H(+). It participates in amino-acid biosynthesis; L-lysine biosynthesis via DAP pathway; LL-2,6-diaminopimelate from (S)-tetrahydrodipicolinate (aminotransferase route): step 1/1. In terms of biological role, involved in the synthesis of meso-diaminopimelate (m-DAP or DL-DAP), required for both lysine and peptidoglycan biosynthesis. Catalyzes the direct conversion of tetrahydrodipicolinate to LL-diaminopimelate. This Parabacteroides distasonis (strain ATCC 8503 / DSM 20701 / CIP 104284 / JCM 5825 / NCTC 11152) protein is LL-diaminopimelate aminotransferase.